The primary structure comprises 377 residues: Transcription factor EC (377 aa).

The bHLH domain occupies 169-222 (QKKDNHNLIERRRRYNINYRIKELGTLIPKSNDPDMRWNKGTILKASVEYIKWL). The disordered stretch occupies residues 349–377 (DPLLSSTSPAASKESSRRSSFSTDDGDDL). The span at 353–370 (SSTSPAASKESSRRSSFS) shows a compositional bias: low complexity.

Belongs to the MiT/TFE family.

The protein resides in the nucleus. In terms of biological role, transcriptional regulator that acts as a repressor or an activator. Binds DNA. This Gallus gallus (Chicken) protein is Transcription factor EC (TFEC).